The chain runs to 106 residues: Urease subunit beta (106 aa).

Belongs to the urease beta subunit family. As to quaternary structure, heterotrimer of UreA (gamma), UreB (beta) and UreC (alpha) subunits. Three heterotrimers associate to form the active enzyme.

The protein resides in the cytoplasm. It catalyses the reaction urea + 2 H2O + H(+) = hydrogencarbonate + 2 NH4(+). The protein operates within nitrogen metabolism; urea degradation; CO(2) and NH(3) from urea (urease route): step 1/1. This Prochlorococcus marinus (strain MIT 9215) protein is Urease subunit beta.